The chain runs to 411 residues: Serine hydroxymethyltransferase (411 aa).

Gly120–Leu122 lines the (6S)-5,6,7,8-tetrahydrofolate pocket. Lys225 carries the post-translational modification N6-(pyridoxal phosphate)lysine. Ser350–Phe352 is a (6S)-5,6,7,8-tetrahydrofolate binding site.

It belongs to the SHMT family. Homodimer. Pyridoxal 5'-phosphate serves as cofactor.

It is found in the cytoplasm. The catalysed reaction is (6R)-5,10-methylene-5,6,7,8-tetrahydrofolate + glycine + H2O = (6S)-5,6,7,8-tetrahydrofolate + L-serine. It functions in the pathway one-carbon metabolism; tetrahydrofolate interconversion. The protein operates within amino-acid biosynthesis; glycine biosynthesis; glycine from L-serine: step 1/1. Catalyzes the reversible interconversion of serine and glycine with tetrahydrofolate (THF) serving as the one-carbon carrier. This reaction serves as the major source of one-carbon groups required for the biosynthesis of purines, thymidylate, methionine, and other important biomolecules. Also exhibits THF-independent aldolase activity toward beta-hydroxyamino acids, producing glycine and aldehydes, via a retro-aldol mechanism. The sequence is that of Serine hydroxymethyltransferase from Lactobacillus acidophilus (strain ATCC 700396 / NCK56 / N2 / NCFM).